The sequence spans 195 residues: Glycerol-3-phosphate acyltransferase (195 aa).

A run of 5 helical transmembrane segments spans residues 3 to 23 (FQVV…GFIL), 52 to 72 (LALL…AIAQ), 80 to 100 (ILFL…YLFF), 113 to 133 (LIFI…ICFL), and 147 to 167 (LIAL…IFAI).

It belongs to the PlsY family. In terms of assembly, probably interacts with PlsX.

It localises to the cell inner membrane. The catalysed reaction is an acyl phosphate + sn-glycerol 3-phosphate = a 1-acyl-sn-glycero-3-phosphate + phosphate. Its pathway is lipid metabolism; phospholipid metabolism. Functionally, catalyzes the transfer of an acyl group from acyl-phosphate (acyl-PO(4)) to glycerol-3-phosphate (G3P) to form lysophosphatidic acid (LPA). This enzyme utilizes acyl-phosphate as fatty acyl donor, but not acyl-CoA or acyl-ACP. In Ehrlichia ruminantium (strain Gardel), this protein is Glycerol-3-phosphate acyltransferase.